A 202-amino-acid chain; its full sequence is Phosphoenolpyruvate guanylyltransferase (202 aa).

Phosphoenolpyruvate contacts are provided by threonine 140, glycine 156, and serine 159.

The protein belongs to the CofC family.

It carries out the reaction phosphoenolpyruvate + GTP + H(+) = enolpyruvoyl-2-diphospho-5'-guanosine + diphosphate. It participates in cofactor biosynthesis; coenzyme F420 biosynthesis. In terms of biological role, guanylyltransferase that catalyzes the activation of phosphoenolpyruvate (PEP) as enolpyruvoyl-2-diphospho-5'-guanosine, via the condensation of PEP with GTP. It is involved in the biosynthesis of coenzyme F420, a hydride carrier cofactor. The polypeptide is Phosphoenolpyruvate guanylyltransferase (Chloroflexus aggregans (strain MD-66 / DSM 9485)).